The chain runs to 420 residues: Probable glucuronosyltransferase Os04g0398600 (420 aa).

Topologically, residues 1-4 (MGSR) are cytoplasmic. The chain crosses the membrane as a helical; Signal-anchor for type II membrane protein span at residues 5-25 (TVGWWLLAAAVVLAAAAADSG). Topologically, residues 26 to 420 (EAERAAEQHS…AGPVGDLKAW (395 aa)) are lumenal. 2 N-linked (GlcNAc...) asparagine glycosylation sites follow: asparagine 147 and asparagine 408.

The protein belongs to the glycosyltransferase 47 family.

The protein resides in the golgi apparatus membrane. Functionally, involved in the synthesis of glucuronoxylan hemicellulose in secondary cell walls. The polypeptide is Probable glucuronosyltransferase Os04g0398600 (Oryza sativa subsp. japonica (Rice)).